A 228-amino-acid chain; its full sequence is Cytidylate kinase (228 aa).

17-25 (GPTASGKGT) is a binding site for ATP.

It belongs to the cytidylate kinase family. Type 1 subfamily.

The protein localises to the cytoplasm. It catalyses the reaction CMP + ATP = CDP + ADP. It carries out the reaction dCMP + ATP = dCDP + ADP. The protein is Cytidylate kinase of Burkholderia ambifaria (strain MC40-6).